A 1691-amino-acid polypeptide reads, in one-letter code: Collagen alpha-6(IV) chain (1691 aa).

The first 22 residues, Met1–Ala22, serve as a signal peptide directing secretion. The segment at Gly23–Lys46 is 7S domain. The tract at residues Gly47–Ser1463 is triple-helical region. Disordered regions lie at residues Ile108 to Lys338, Gly404 to Lys473, Gly486 to Pro881, Gly915 to Asp1099, and Thr1185 to Met1459. N-linked (GlcNAc...) asparagine glycosylation is present at Asn127. Over residues Pro185 to Pro197 the composition is skewed to low complexity. The segment covering Ala198–Leu213 has biased composition (pro residues). Low complexity-rich tracts occupy residues Gln311–Lys320 and Gly421–Leu431. 2 stretches are compositionally biased toward pro residues: residues Pro432–Pro443 and Thr491–Pro502. The span at Trp503–Lys512 shows a compositional bias: low complexity. The Cell attachment site motif lies at Arg515–Asp517. The span at Pro526–Pro541 shows a compositional bias: low complexity. The Cell attachment site signature appears at Arg560–Asp562. Residues Gly588–Gly599 are compositionally biased toward gly residues. 4 stretches are compositionally biased toward low complexity: residues Leu641–Gly652, Pro660–Gly703, Leu722–Pro735, and Ser802–Pro820. Residues Pro842–Lys851 show a composition bias toward basic residues. Positions Pro853–Lys878 are enriched in low complexity. The Cell attachment site motif lies at Arg986–Asp988. Over residues Ser1055–Lys1068 the composition is skewed to low complexity. A compositionally biased stretch (gly residues) spans Gly1210–Gly1220. Residues Pro1234–Leu1253 are compositionally biased toward low complexity. Pro residues predominate over residues Pro1275–Pro1284. A compositionally biased stretch (polar residues) spans Ser1360–Thr1371. Low complexity-rich tracts occupy residues Leu1384–Pro1397 and Ala1429–Met1459. A Collagen IV NC1 domain is found at Gly1467–Leu1691. 6 disulfide bridges follow: Cys1482-Cys1571, Cys1515-Cys1568, Cys1527-Cys1533, Cys1590-Cys1687, Cys1624-Cys1684, and Cys1636-Cys1643.

This sequence belongs to the type IV collagen family. As to quaternary structure, there are six type IV collagen isoforms, alpha 1(IV)-alpha 6(IV), each of which can form a triple helix structure with 2 other chains to generate type IV collagen network. Post-translationally, prolines at the third position of the tripeptide repeating unit (G-X-Y) are hydroxylated in some or all of the chains. In terms of processing, type IV collagens contain numerous cysteine residues which are involved in inter- and intramolecular disulfide bonding. 12 of these, located in the NC1 domain, are conserved in all known type IV collagens. The trimeric structure of the NC1 domains is stabilized by covalent bonds between Lys and Met residues.

It is found in the secreted. It localises to the extracellular space. The protein localises to the extracellular matrix. Its subcellular location is the basement membrane. In terms of biological role, type IV collagen is the major structural component of glomerular basement membranes (GBM), forming a 'chicken-wire' meshwork together with laminins, proteoglycans and entactin/nidogen. This chain is Collagen alpha-6(IV) chain (COL4A6), found in Homo sapiens (Human).